A 381-amino-acid polypeptide reads, in one-letter code: N-acetyldiaminopimelate deacetylase (381 aa).

Asp71 is an active-site residue. The Proton acceptor role is filled by Glu130.

It belongs to the peptidase M20A family. N-acetyldiaminopimelate deacetylase subfamily.

The catalysed reaction is N-acetyl-(2S,6S)-2,6-diaminopimelate + H2O = (2S,6S)-2,6-diaminopimelate + acetate. The protein operates within amino-acid biosynthesis; L-lysine biosynthesis via DAP pathway; LL-2,6-diaminopimelate from (S)-tetrahydrodipicolinate (acetylase route): step 3/3. In terms of biological role, catalyzes the conversion of N-acetyl-diaminopimelate to diaminopimelate and acetate. The polypeptide is N-acetyldiaminopimelate deacetylase (Ligilactobacillus salivarius (strain UCC118) (Lactobacillus salivarius)).